The sequence spans 1563 residues: Rab-3-interacting molecule unc-10 (1563 aa).

The region spanning 7–133 is the RabBD domain; sequence MPDLSHLSAE…AKTGKWFQPE (127 aa). Over residues 25-35 the composition is skewed to basic and acidic residues; sequence FKRQKDEEAKE. Positions 25–50 are disordered; the sequence is FKRQKDEEAKETQISQKASEELSELD. The FYVE-type zinc finger occupies 66–121; it reads TQDDAICQICQKTKFADGIGHKCFYCQLRSCARCGGRAQSKNKAIWACSLCQKRQQ. Residues cysteine 72, cysteine 75, cysteine 88, cysteine 91, cysteine 96, cysteine 99, cysteine 113, and cysteine 116 each coordinate Zn(2+). 2 disordered regions span residues 128 to 466 and 582 to 605; these read KWFQ…DHLN and GGLDMQANRRRDKSLSLSPSRNDH. Positions 172–182 are enriched in polar residues; that stretch reads NTPNYQNNQQP. Composition is skewed to low complexity over residues 190–284 and 300–316; these read NHNQ…RNQT and QTPQQQPSQYQNNVGAA. Over residues 326–345 the composition is skewed to basic and acidic residues; it reads QEQHHQQMNEQRTDNNRMRE. Composition is skewed to polar residues over residues 356 to 367 and 379 to 389; these read RQPSLEQTTPMN and QRPTFYTGNSE. The segment covering 395–415 has biased composition (low complexity); the sequence is FDGQMQQGSQQNNQNQNQNNR. Residues 643–733 form the PDZ domain; it reads HMILHRTENS…DTSVELIVSR (91 aa). The C2 1 domain occupies 840–962; it reads IFGRIEVSFV…PLDGEHSLMC (123 aa). 3 disordered regions span residues 1054–1163, 1177–1311, and 1346–1373; these read ENDI…YLGD, GQMT…GGSA, and VGIPGNLSSDRLTEPTPPFLKQASKEST. Polar residues predominate over residues 1086–1097; that stretch reads WTQNHQRQSGYT. Residues 1112-1121 are compositionally biased toward basic residues; the sequence is YNRRQQRRPR. Residues 1129–1154 are compositionally biased toward basic and acidic residues; it reads MEREDMYDPTRKHRDDNEYSMRESVR. Residues 1181 to 1230 are compositionally biased toward low complexity; sequence PKQHNQQHQPHPLSQAHQQQQTAGVQPQHHQGFQQQQHPQQPNQQMQQMQ. Polar residues predominate over residues 1242-1255; that stretch reads GSETLSVHSTNSMP. Residues 1256 to 1277 are compositionally biased toward low complexity; that stretch reads TTMTTVNRRNMNANNTSNDNTS. Positions 1278–1288 are enriched in polar residues; sequence FAETPTANTNR. Low complexity predominate over residues 1297–1311; the sequence is NSLASSSSVAGGGSA. The C2 2 domain occupies 1417–1536; the sequence is VLGEIQIALM…LGSQPLIGWY (120 aa).

As to expression, restricted to discrete puncta in synapse-rich regions of the nervous system including the nerve ring, the ventral nerve cord and the dorsal nerve cord. Localized expression was found in the head.

It localises to the synapse. Its function is as follows. Regulates the efficiency of a post-docking step of the release pathway. Acts after vesicle docking likely via regulating priming. May regulate the conformational changes in syntaxin. Binding of vesicles via rab-3[GTP] to Rim may signal the presence of a docked synaptic vesicle. Rim may then signal to unc-13 to change the conformation of syntaxin from the closed to the open state. Syntaxin could then engage synaptobrevin on the docked vesicle to form SNARE complexes and to prime the vesicle for release. Not required for the development or the structural organization of synapses. May play a role in regulating entry into the dauer state. The protein is Rab-3-interacting molecule unc-10 of Caenorhabditis elegans.